The chain runs to 552 residues: Alcohol dehydrogenase [acceptor] (552 aa).

3 to 32 (DYIIVGAGSAGCVLANRLSADPSKRVCLLE) contacts FAD. His-469 functions as the Proton acceptor in the catalytic mechanism.

It belongs to the GMC oxidoreductase family. FAD serves as cofactor.

The protein localises to the cell inner membrane. It carries out the reaction a primary alcohol + A = an aldehyde + AH2. Its function is as follows. Converts aliphatic medium-chain-length alcohols into aldehydes. May be linked to the electron transfer chain. In Pseudomonas putida (Arthrobacter siderocapsulatus), this protein is Alcohol dehydrogenase [acceptor] (alkJ).